The following is a 408-amino-acid chain: Peptidase T (408 aa).

His-78 lines the Zn(2+) pocket. Asp-80 is a catalytic residue. Asp-141 contacts Zn(2+). Glu-175 functions as the Proton acceptor in the catalytic mechanism. The Zn(2+) site is built by Glu-176, Asp-198, and His-380.

This sequence belongs to the peptidase M20B family. Zn(2+) serves as cofactor.

The protein localises to the cytoplasm. It catalyses the reaction Release of the N-terminal residue from a tripeptide.. Functionally, cleaves the N-terminal amino acid of tripeptides. The polypeptide is Peptidase T (Clostridium botulinum (strain Langeland / NCTC 10281 / Type F)).